We begin with the raw amino-acid sequence, 250 residues long: tRNA pseudouridine synthase A (250 aa).

The active-site Nucleophile is aspartate 53. A substrate-binding site is contributed by tyrosine 111.

It belongs to the tRNA pseudouridine synthase TruA family. As to quaternary structure, homodimer.

The catalysed reaction is uridine(38/39/40) in tRNA = pseudouridine(38/39/40) in tRNA. In terms of biological role, formation of pseudouridine at positions 38, 39 and 40 in the anticodon stem and loop of transfer RNAs. This Streptococcus uberis (strain ATCC BAA-854 / 0140J) protein is tRNA pseudouridine synthase A.